The chain runs to 1113 residues: Coiled-coil domain-containing protein 158 (1113 aa).

Positions 1-14 (MESKAWESNNEDLL) are enriched in polar residues. The segment at 1–26 (MESKAWESNNEDLLSSSGVTSNGGSS) is disordered. Over residues 15–26 (SSSGVTSNGGSS) the composition is skewed to low complexity. 2 coiled-coil regions span residues 72–183 (GKEH…LSHE) and 243–833 (VEDQ…QEQE). Disordered stretches follow at residues 848–902 (LQGP…DPTR) and 955–1062 (CHRS…IETT). 5 stretches are compositionally biased toward polar residues: residues 867–894 (ASVTRSHSNVPSSQSTASFLSHHSTKAN), 955–974 (CHRSNNSLRDSTEGSKSSET), 994–1017 (FTFTSAASPSVKNSASRSFNSSPK), 1024–1040 (LLTSSVEGSIGSTSQYR), and 1053–1062 (DSQSPPIETT). Residues 1061 to 1113 (TTGKTCRKLQNRLESLQTLVEDLQLKNQAMSSMIRNQEKRIQKVKDQEKMLLK) are a coiled coil.

The chain is Coiled-coil domain-containing protein 158 (CCDC158) from Homo sapiens (Human).